Reading from the N-terminus, the 568-residue chain is Protein yellow (568 aa).

The signal sequence occupies residues 1–28 (MHAQDKGGILPALSLLLIAVAMVSPSQA). Asn151 and Asn222 each carry an N-linked (GlcNAc...) asparagine glycan.

Belongs to the major royal jelly protein family.

It is found in the secreted. Functionally, controls the pigmentation pattern of the adult cuticle and larval mouth parts. The protein is Protein yellow (y) of Drosophila subobscura (Fruit fly).